Consider the following 398-residue polypeptide: Acetate kinase (398 aa).

N8 contacts Mg(2+). K15 lines the ATP pocket. R92 lines the substrate pocket. D149 (proton donor/acceptor) is an active-site residue. ATP-binding positions include H209–G213, D283–R285, and G331–N335. E385 provides a ligand contact to Mg(2+).

It belongs to the acetokinase family. Homodimer. Mg(2+) is required as a cofactor. Mn(2+) serves as cofactor.

It is found in the cytoplasm. It carries out the reaction acetate + ATP = acetyl phosphate + ADP. It participates in metabolic intermediate biosynthesis; acetyl-CoA biosynthesis; acetyl-CoA from acetate: step 1/2. Catalyzes the formation of acetyl phosphate from acetate and ATP. Can also catalyze the reverse reaction. The sequence is that of Acetate kinase from Corynebacterium efficiens (strain DSM 44549 / YS-314 / AJ 12310 / JCM 11189 / NBRC 100395).